Reading from the N-terminus, the 390-residue chain is GTPase Obg (390 aa).

The Obg domain maps to 1-159 (MKFIDEALIR…RDLQLELMLL (159 aa)). The OBG-type G domain occupies 160–333 (ADVGMLGLPN…LCRDIMDFIE (174 aa)). Residues 166–173 (GLPNAGKS), 191–195 (FTTLV), 213–216 (DIPG), 283–286 (NKID), and 314–316 (SAV) each bind GTP. 2 residues coordinate Mg(2+): Ser-173 and Thr-193. The tract at residues 363–390 (DHQFEDEDEDWDDWSEEDEEGVETIYKP) is disordered. Acidic residues predominate over residues 366–384 (FEDEDEDWDDWSEEDEEGV).

The protein belongs to the TRAFAC class OBG-HflX-like GTPase superfamily. OBG GTPase family. Monomer. It depends on Mg(2+) as a cofactor.

The protein localises to the cytoplasm. In terms of biological role, an essential GTPase which binds GTP, GDP and possibly (p)ppGpp with moderate affinity, with high nucleotide exchange rates and a fairly low GTP hydrolysis rate. Plays a role in control of the cell cycle, stress response, ribosome biogenesis and in those bacteria that undergo differentiation, in morphogenesis control. The protein is GTPase Obg of Pasteurella multocida (strain Pm70).